The primary structure comprises 219 residues: Beta-crystallin B2 (219 aa).

Ala-2 is modified (N-acetylalanine). The tract at residues 2–16 (ASEHQMPASKQQPAS) is N-terminal arm. 2 Beta/gamma crystallin 'Greek key' domains span residues 17 to 56 (PNIA…LVHS) and 57 to 101 (GPWV…RPIK). The connecting peptide stretch occupies residues 102-120 (VVRAPRQPLPTRQTKDSQE). 2 consecutive Beta/gamma crystallin 'Greek key' domains span residues 121–162 (HKIV…RVQS) and 163–205 (GTWV…RRIR). The C-terminal arm stretch occupies residues 207 to 219 (MQWHQRGAYHPSN).

Belongs to the beta/gamma-crystallin family. In terms of assembly, homo/heterodimer, or complexes of higher-order. The structure of beta-crystallin oligomers seems to be stabilized through interactions between the N-terminal arms.

Crystallins are the dominant structural components of the vertebrate eye lens. The sequence is that of Beta-crystallin B2 (CRYBB2) from Gallus gallus (Chicken).